The following is a 253-amino-acid chain: Chitooligosaccharide deacetylase (253 aa).

Mg(2+)-binding residues include H61 and H126.

Belongs to the YdjC deacetylase family. ChbG subfamily. In terms of assembly, homodimer. The cofactor is Mg(2+).

It is found in the cytoplasm. It catalyses the reaction N,N'-diacetylchitobiose + H2O = N-acetyl-beta-D-glucosaminyl-(1-&gt;4)-D-glucosamine + acetate. The enzyme catalyses diacetylchitobiose-6'-phosphate + H2O = N'-monoacetylchitobiose-6'-phosphate + acetate. Its pathway is glycan degradation; chitin degradation. Involved in the degradation of chitin. ChbG is essential for growth on the acetylated chitooligosaccharides chitobiose and chitotriose but is dispensable for growth on cellobiose and chitosan dimer, the deacetylated form of chitobiose. Deacetylation of chitobiose-6-P and chitotriose-6-P is necessary for both the activation of the chb promoter by the regulatory protein ChbR and the hydrolysis of phosphorylated beta-glucosides by the phospho-beta-glucosidase ChbF. Catalyzes the removal of only one acetyl group from chitobiose-6-P to yield monoacetylchitobiose-6-P, the inducer of ChbR and the substrate of ChbF. This chain is Chitooligosaccharide deacetylase, found in Yersinia pseudotuberculosis serotype O:1b (strain IP 31758).